Here is a 429-residue protein sequence, read N- to C-terminus: Protein cereblon (429 aa).

The disordered stretch occupies residues 1 to 30 (MGNHLPLLPAESEEEDEMEVEDQDSKEAKK). Residues 11–22 (ESEEEDEMEVED) show a composition bias toward acidic residues. Ser-12 is modified (phosphoserine). The 239-residue stretch at 68–306 (IPVLPQVMMI…CELDIMNKCT (239 aa)) folds into the Lon N-terminal domain. One can recognise a CULT domain in the interval 305–413 (CTSLCCKQCQ…LTRSALLPTI (109 aa)). Residues Cys-310 and Cys-313 each contribute to the Zn(2+) site. (S)-thalidomide contacts are provided by His-365, Trp-367, and Trp-373. Zn(2+) contacts are provided by Cys-378 and Cys-381.

It belongs to the CRBN family. As to quaternary structure, component of a DCX (DDB1-CUL4-X-box) protein ligase complex, at least composed of CRBN, CUL4A, DDB1 and RBX1. Interacts directly with DDB1. Interacts with KCNT1. Interacts with ILF2. Interacts with TRAF6 and ECSIT. In terms of processing, ubiquitinated, ubiquitination is mediated by its own DCX protein ligase complex.

The protein resides in the cytoplasm. Its subcellular location is the nucleus. The protein localises to the membrane. Its pathway is protein modification; protein ubiquitination. In terms of biological role, substrate recognition component of a DCX (DDB1-CUL4-X-box) E3 protein ligase complex that mediates the ubiquitination and subsequent proteasomal degradation of target proteins, such as MEIS2, ILF2 or GLUL. Normal degradation of key regulatory proteins is required for normal limb outgrowth and expression of the fibroblast growth factor FGF8. Maintains presynaptic glutamate release and consequently cognitive functions, such as memory and learning, by negatively regulating large-conductance calcium-activated potassium (BK) channels in excitatory neurons. Likely to function by regulating the assembly and neuronal surface expression of BK channels via its interaction with KCNT1. May also be involved in regulating anxiety-like behaviors via a BK channel-independent mechanism. Plays a negative role in TLR4 signaling by interacting with TRAF6 and ECSIT, leading to inhibition of ECSIT ubiquitination, an important step of the signaling. This is Protein cereblon (CRBN) from Pongo abelii (Sumatran orangutan).